The following is a 361-amino-acid chain: Putative F-box protein At3g19560 (361 aa).

The F-box domain occupies 3–49 (MTMMSDISQDLLEEILSRVPITSLRAVKSTCKRWKDLLNDPSFSKKY).

The protein is Putative F-box protein At3g19560 of Arabidopsis thaliana (Mouse-ear cress).